The sequence spans 264 residues: MAGPTTAERGDRQQESSGPPPARWSGTRRLRALVVLAALLVLLAGGCAWLLYGSSWLRLERVSVSGTRMLTPADVREAASVPVGAPLVSVDTEAVEARLRRKLPRIDTVDVVRSWPHGIGLKVTERTPVLLVRKAGTFVEVDDDGVRFATVSQAPKGVPVLELTASRSGSGAASFRRFGTDRLVREAVRVGGDLPAAVARQTRTVKVGSYDDISLELGDGRSVAWGSGEDGRAKARALTALMKAVPGARHFDVSVPTAPASSGS.

Positions Met1–Trp24 are disordered. At Met1–Arg31 the chain is on the cytoplasmic side. The helical transmembrane segment at Ala32 to Tyr52 threads the bilayer. Residues Gly53–Ser264 lie on the Extracellular side of the membrane. The POTRA domain maps to Leu57–Arg126.

Belongs to the FtsQ/DivIB family. FtsQ subfamily.

The protein resides in the cell membrane. Essential cell division protein. This chain is Cell division protein FtsQ, found in Streptomyces collinus.